A 172-amino-acid chain; its full sequence is Small ribosomal subunit protein uS5 (172 aa).

An S5 DRBM domain is found at leucine 11–phenylalanine 74.

The protein belongs to the universal ribosomal protein uS5 family. Part of the 30S ribosomal subunit. Contacts proteins S4 and S8.

In terms of biological role, with S4 and S12 plays an important role in translational accuracy. Functionally, located at the back of the 30S subunit body where it stabilizes the conformation of the head with respect to the body. This chain is Small ribosomal subunit protein uS5, found in Neorickettsia sennetsu (strain ATCC VR-367 / Miyayama) (Ehrlichia sennetsu).